We begin with the raw amino-acid sequence, 391 residues long: MGRTVQDELEQIRAKGLFRSTRLIQGRQSARVTMEGRQLLLLCSNNYLGLAEHPALIAASMAAAEQFGSSSGASRLVSGSMEPHEALETAVAAFKRTESALAFNSGYAANTGIIQALVGRGDVIFCDRLNHASIIDGALLSGARLVRYPHNDAVALAGLMEKQRGTGRCLIVSDGVFSMDGDLAPLAELAELRRRHDALLMVDDAHGCGVLGEQGRGSAELLGVLSHIDIHVGTFGKALGSFGAYAALSRELRDLLVNRARSFIFSTSLPPAVLAVSTAALELVQAAEGDELRKRLRDNTSLFRGLLRDAGFFLGEGNTQIVPILTGGAEETMDFSRQLLEEGMFVQGIRPPTVPAGACRLRCTVMATHSPQDLTWAAERITHIGRRLGVV.

A substrate-binding site is contributed by Arg19. Pyridoxal 5'-phosphate is bound at residue 106-107 (GY). His131 is a substrate binding site. The pyridoxal 5'-phosphate site is built by Ser178, His206, and Thr234. Lys237 is subject to N6-(pyridoxal phosphate)lysine. Thr353 is a substrate binding site.

The protein belongs to the class-II pyridoxal-phosphate-dependent aminotransferase family. BioF subfamily. In terms of assembly, homodimer. The cofactor is pyridoxal 5'-phosphate.

It carries out the reaction 6-carboxyhexanoyl-[ACP] + L-alanine + H(+) = (8S)-8-amino-7-oxononanoate + holo-[ACP] + CO2. Its pathway is cofactor biosynthesis; biotin biosynthesis. Functionally, catalyzes the decarboxylative condensation of pimeloyl-[acyl-carrier protein] and L-alanine to produce 8-amino-7-oxononanoate (AON), [acyl-carrier protein], and carbon dioxide. The sequence is that of 8-amino-7-oxononanoate synthase from Pelobacter propionicus (strain DSM 2379 / NBRC 103807 / OttBd1).